Consider the following 307-residue polypeptide: Acyl transferase (307 aa).

Active-site charge relay system residues include Ser116, Asp213, and His243.

The protein belongs to the LuxD family.

It functions in the pathway lipid metabolism; fatty acid reduction for biolumincescence. Its function is as follows. Acyl transferase is part of the fatty acid reductase system required for aldehyde biosynthesis; it produces fatty acids for the luminescent reaction. The sequence is that of Acyl transferase from Aliivibrio fischeri (strain ATCC 700601 / ES114) (Vibrio fischeri).